The chain runs to 213 residues: Orotate phosphoribosyltransferase (213 aa).

Lys-26 contacts 5-phospho-alpha-D-ribose 1-diphosphate. Residue 34–35 (FF) coordinates orotate. Residues 72–73 (YK), Arg-99, Lys-100, Lys-103, His-105, and 124–132 (DDVITAGTA) contribute to the 5-phospho-alpha-D-ribose 1-diphosphate site. Positions 128 and 156 each coordinate orotate.

Belongs to the purine/pyrimidine phosphoribosyltransferase family. PyrE subfamily. Homodimer. Mg(2+) serves as cofactor.

The enzyme catalyses orotidine 5'-phosphate + diphosphate = orotate + 5-phospho-alpha-D-ribose 1-diphosphate. It functions in the pathway pyrimidine metabolism; UMP biosynthesis via de novo pathway; UMP from orotate: step 1/2. Functionally, catalyzes the transfer of a ribosyl phosphate group from 5-phosphoribose 1-diphosphate to orotate, leading to the formation of orotidine monophosphate (OMP). This Erwinia tasmaniensis (strain DSM 17950 / CFBP 7177 / CIP 109463 / NCPPB 4357 / Et1/99) protein is Orotate phosphoribosyltransferase.